Reading from the N-terminus, the 505-residue chain is Flagellin (505 aa).

The protein belongs to the bacterial flagellin family.

It localises to the secreted. The protein localises to the bacterial flagellum. Its function is as follows. Flagellin is the subunit protein which polymerizes to form the filaments of bacterial flagella. This is Flagellin (fliC) from Salmonella moscow.